A 607-amino-acid polypeptide reads, in one-letter code: Elongation factor 4 (607 aa).

The 183-residue stretch at 11–193 (SKIRNFSIIA…QIVEKVPAPT (183 aa)) folds into the tr-type G domain. Residues 23–28 (DHGKST) and 140–143 (NKID) contribute to the GTP site.

The protein belongs to the TRAFAC class translation factor GTPase superfamily. Classic translation factor GTPase family. LepA subfamily.

Its subcellular location is the cell membrane. It carries out the reaction GTP + H2O = GDP + phosphate + H(+). Functionally, required for accurate and efficient protein synthesis under certain stress conditions. May act as a fidelity factor of the translation reaction, by catalyzing a one-codon backward translocation of tRNAs on improperly translocated ribosomes. Back-translocation proceeds from a post-translocation (POST) complex to a pre-translocation (PRE) complex, thus giving elongation factor G a second chance to translocate the tRNAs correctly. Binds to ribosomes in a GTP-dependent manner. The polypeptide is Elongation factor 4 (Bacillus cereus (strain ZK / E33L)).